The chain runs to 3412 residues: Genome polyprotein (3412 aa).

Residues 2–15 (SKKPGKPGRNRVVN) form an interaction with host EXOC1 region. The Cytoplasmic segment spans residues 2–108 (SKKPGKPGRN…PSKKRGGTRS (107 aa)). The hydrophobic; homodimerization of capsid protein C stretch occupies residues 37–72 (LLDGRGPVRFILAILTFFRFTALQPTEALKRRWRAV). Positions 104–121 (GGTRSLLGLAALIGLASS) are cleaved as a propeptide — ER anchor for the capsid protein C, removed in mature form by serine protease NS3. A helical membrane pass occupies residues 109 to 129 (LLGLAALIGLASSLQLSTYQG). Residues 130-247 (KVLMSINKTD…TTKYLTKVEN (118 aa)) are Extracellular-facing. N-linked (GlcNAc...) asparagine; by host glycosylation occurs at N136. A helical transmembrane segment spans residues 248–268 (WVLRNPGYALVALAIGWMLGS). Residues 269 to 273 (NNTQR) lie on the Cytoplasmic side of the membrane. A helical transmembrane segment spans residues 274–288 (VVFVIMLMLIAPAYS). The Extracellular segment spans residues 289 to 741 (FNCLGTSNRD…QVFGGAFRTL (453 aa)). 8 disulfide bridges follow: C291-C318, C348-C404, C348-C409, C362-C393, C380-C404, C380-C409, C478-C576, and C593-C624. The fusion peptide stretch occupies residues 386–399 (DRGWGNGCGLFGKG). A helical membrane pass occupies residues 742-762 (FGGMSWITQGLLGALLLWMGL). Residues 763 to 768 (QARDRS) lie on the Cytoplasmic side of the membrane. Residues 769–789 (ISLTLLAVGGILIFLATSVQA) traverse the membrane as a helical segment. Residues 790–1214 (DSGCAIDLQR…AFAEMNTGGD (425 aa)) lie on the Extracellular side of the membrane. Disulfide bonds link C793–C804 and C844–C932. Residues N919, N964, and N996 are each glycosylated (N-linked (GlcNAc...) asparagine; by host). Cystine bridges form between C968-C1012, C1069-C1118, C1080-C1101, C1080-C1102, C1101-C1105, and C1102-C1105. A helical transmembrane segment spans residues 1215–1235 (VIHLALVAVFKVQPAFLAGLF). Residues 1236 to 1245 (LRMQWSNQEN) lie on the Cytoplasmic side of the membrane. The chain crosses the membrane as a helical span at residues 1246–1266 (ILMVIGAAFLQMAANDLKLEV). The Lumenal segment spans residues 1267-1288 (LPILNAMSIAWMLIRAMKEGKV). Residues 1289-1303 (AMYALPILCALTPGM) traverse the membrane as a helical segment. Position 1304 (R1304) is a topological domain, cytoplasmic. A helical membrane pass occupies residues 1305–1325 (MAGLDVIRCLLLIIGIVTLLN). The Lumenal segment spans residues 1326-1339 (ERRESVAKKKGGYL). A helical membrane pass occupies residues 1340–1360 (LAAALCQAGVCSPLIMMGGLI). Topologically, residues 1361 to 1369 (LAHPNGKRS) are cytoplasmic. A helical transmembrane segment spans residues 1370–1390 (WPASEVLTGVGLMCALAGGLL). The Lumenal portion of the chain corresponds to 1391–1393 (EFE). Residues 1394–1414 (ETSMVVPFAIAGLMYITYTVS) form a helical membrane-spanning segment. The Cytoplasmic portion of the chain corresponds to 1415–1471 (GKAAEMWIEKAADITWEQNAEITGTSPRLDVDLDSHGNFKLLNDPGAPVHLFALRFI). An interacts with and activates NS3 protease region spans residues 1422-1461 (IEKAADITWEQNAEITGTSPRLDVDLDSHGNFKLLNDPGA). The helical intramembrane region spans 1472–1492 (LLGLSARFHWFIPFGVLGFWL). The Cytoplasmic segment spans residues 1493–2167 (LGKHSKRGGA…KEALAELPDS (675 aa)). The Peptidase S7 domain maps to 1500-1677 (GGALWDVPSP…ERTEEPIPDA (178 aa)). Active-site charge relay system; for serine protease NS3 activity residues include H1550, D1574, and S1634. A Helicase ATP-binding domain is found at 1680–1836 (EEMLRKRKLT…DSNSPILDVE (157 aa)). Residues 1684–1687 (RKRK) are important for RNA-binding. 1693–1700 (LHPGAGKT) provides a ligand contact to ATP. Residues 1784 to 1787 (DEAH) carry the DEAH box motif. One can recognise a Helicase C-terminal domain in the interval 1847–2011 (GYEWITNFTG…GLVAQMYQPE (165 aa)). The regulates the ATPase activity of NS3 helicase stretch occupies residues 2162-2166 (AELPD). Residues 2168–2188 (LETLLLIGMLCVMSMGTFIFL) traverse the membrane as a helical segment. The Lumenal portion of the chain corresponds to 2189-2193 (MNRKG). Positions 2194-2214 (VGKMGLGAFVMTLATALLWAA) form an intramembrane region, helical. Position 2215 (E2215) is a topological domain, lumenal. A helical transmembrane segment spans residues 2216–2236 (VPGTQIAGVLLIVFLLMIVLI). Residues 2237–2251 (PEPEKQRSQTDNQLA) lie on the Cytoplasmic side of the membrane. The helical transmembrane segment at 2252–2266 (VFLICIMTLMGVVAA) threads the bilayer. Topologically, residues 2267–2308 (NEMGLLEKTKSDIAKLFGSQPGSVGFATRTTPWDISLDIKPA) are lumenal. The segment at residues 2309 to 2329 (TAWALYAAATMVMTPLIKHLI) is an intramembrane region (helical). Topologically, residues 2330-2376 (TTQYVNFSLTAIASQAGVLLGLTNGMPFTAMDLSVPLLVLGCWNQMT) are lumenal. Residues 2377-2397 (LPSLAVAVMLLAIHYAFMIPG) traverse the membrane as a helical segment. Over 2398 to 2440 (WQAEAMRAAQRRTAAGIMKNAVVDGIVATDIPDLSPATPMTEK) the chain is Cytoplasmic. Residues 2441–2461 (KMGQILLIAAAVLAVLVRPGI) form a helical membrane-spanning segment. Residues 2462-2466 (CSIKE) are Lumenal-facing. A helical transmembrane segment spans residues 2467–2487 (FGVLGSAALVTLIEGTAGVVW). Topologically, residues 2488-3412 (NCTTAVGLCN…IGEEEYRDYM (925 aa)) are cytoplasmic. Residues 2525 to 2790 (GGGKGATLGE…DVNLGSGTRS (266 aa)) form the mRNA cap 0-1 NS5-type MT domain. S2580 provides a ligand contact to S-adenosyl-L-methionine. Position 2580 is a phosphoserine (S2580). K2585 acts as the For 2'-O-MTase activity in catalysis. The S-adenosyl-L-methionine site is built by G2610, W2611, T2628, K2629, D2655, and V2656. D2670 functions as the For 2'-O-MTase activity in the catalytic mechanism. I2671 contributes to the S-adenosyl-L-methionine binding site. Catalysis depends on for 2'-O-MTase activity residues K2706 and E2742. Y2744 is an S-adenosyl-L-methionine binding site. Residues 2771–2780 (QNRSGPRYEE) are compositionally biased toward basic and acidic residues. The interval 2771–2791 (QNRSGPRYEEDVNLGSGTRSV) is disordered. E2964, H2968, C2973, and C2976 together coordinate Zn(2+). Residues 3054 to 3206 (GKMYADDTAG…KPIDDRFATA (153 aa)) form the RdRp catalytic domain. H3241, C3257, and C3376 together coordinate Zn(2+).

In the N-terminal section; belongs to the class I-like SAM-binding methyltransferase superfamily. mRNA cap 0-1 NS5-type methyltransferase family. Homodimer. Interacts (via N-terminus) with host EXOC1 (via C-terminus); this interaction results in EXOC1 degradation through the proteasome degradation pathway. As to quaternary structure, forms heterodimers with envelope protein E in the endoplasmic reticulum and Golgi. In terms of assembly, homodimer; in the endoplasmic reticulum and Golgi. Interacts with protein prM. Interacts with non-structural protein 1. Homodimer; Homohexamer when secreted. Interacts with envelope protein E. NS1 interacts with NS4B. Interacts with host complement protein CFH; this interaction leads to the degradation of C3. As to quaternary structure, interacts (via N-terminus) with serine protease NS3. In terms of assembly, forms a heterodimer with serine protease NS3. May form homooligomers. Forms a heterodimer with NS2B. Interacts with non-structural protein 2A (via N-terminus). Interacts with NS4B. Interacts with unphosphorylated RNA-directed RNA polymerase NS5; this interaction stimulates RNA-directed RNA polymerase NS5 guanylyltransferase activity. As to quaternary structure, interacts with serine protease NS3. In terms of assembly, homodimer. Interacts with host STAT2; this interaction inhibits the phosphorylation of the latter, and, when all viral proteins are present (polyprotein), targets STAT2 for degradation. Interacts with serine protease NS3. Specific enzymatic cleavages in vivo yield mature proteins. Cleavages in the lumen of endoplasmic reticulum are performed by host signal peptidase, whereas cleavages in the cytoplasmic side are performed by serine protease NS3. Signal cleavage at the 2K-4B site requires a prior NS3 protease-mediated cleavage at the 4A-2K site. In terms of processing, cleaved in post-Golgi vesicles by a host furin, releasing the mature small envelope protein M, and peptide pr. This cleavage is incomplete as up to 30% of viral particles still carry uncleaved prM. Post-translationally, N-glycosylated. N-glycosylated. The excreted form is glycosylated and this is required for efficient secretion of the protein from infected cells. In terms of processing, phosphorylated on serines residues. This phosphorylation may trigger NS5 nuclear localization.

The protein localises to the virion. It localises to the host nucleus. Its subcellular location is the host cytoplasm. The protein resides in the host perinuclear region. It is found in the secreted. The protein localises to the virion membrane. It localises to the host endoplasmic reticulum membrane. It carries out the reaction Selective hydrolysis of -Xaa-Xaa-|-Yaa- bonds in which each of the Xaa can be either Arg or Lys and Yaa can be either Ser or Ala.. The enzyme catalyses RNA(n) + a ribonucleoside 5'-triphosphate = RNA(n+1) + diphosphate. It catalyses the reaction a ribonucleoside 5'-triphosphate + H2O = a ribonucleoside 5'-diphosphate + phosphate + H(+). The catalysed reaction is ATP + H2O = ADP + phosphate + H(+). It carries out the reaction a 5'-end (5'-triphosphoguanosine)-ribonucleoside in mRNA + S-adenosyl-L-methionine = a 5'-end (N(7)-methyl 5'-triphosphoguanosine)-ribonucleoside in mRNA + S-adenosyl-L-homocysteine. The enzyme catalyses a 5'-end (N(7)-methyl 5'-triphosphoguanosine)-ribonucleoside in mRNA + S-adenosyl-L-methionine = a 5'-end (N(7)-methyl 5'-triphosphoguanosine)-(2'-O-methyl-ribonucleoside) in mRNA + S-adenosyl-L-homocysteine + H(+). Functionally, plays a role in virus budding by binding to the cell membrane and gathering the viral RNA into a nucleocapsid that forms the core of a mature virus particle. During virus entry, may induce genome penetration into the host cytoplasm after hemifusion induced by the surface proteins. Can migrate to the cell nucleus where it modulates host functions. Overcomes the anti-viral effects of host EXOC1 by sequestering and degrading the latter through the proteasome degradation pathway. Its function is as follows. Inhibits RNA silencing by interfering with host Dicer. In terms of biological role, prevents premature fusion activity of envelope proteins in trans-Golgi by binding to envelope protein E at pH6.0. After virion release in extracellular space, gets dissociated from E dimers. Acts as a chaperone for envelope protein E during intracellular virion assembly by masking and inactivating envelope protein E fusion peptide. prM is the only viral peptide matured by host furin in the trans-Golgi network probably to avoid catastrophic activation of the viral fusion activity in acidic Golgi compartment prior to virion release. prM-E cleavage is inefficient, and many virions are only partially matured. These uncleaved prM would play a role in immune evasion. Functionally, may play a role in virus budding. Exerts cytotoxic effects by activating a mitochondrial apoptotic pathway through M ectodomain. May display a viroporin activity. Its function is as follows. Binds to host cell surface receptor and mediates fusion between viral and cellular membranes. Envelope protein is synthesized in the endoplasmic reticulum in the form of heterodimer with protein prM. They play a role in virion budding in the ER, and the newly formed immature particle is covered with 60 spikes composed of heterodimer between precursor prM and envelope protein E. The virion is transported to the Golgi apparatus where the low pH causes dissociation of PrM-E heterodimers and formation of E homodimers. prM-E cleavage is inefficient, and many virions are only partially matured. These uncleaved prM would play a role in immune evasion. In terms of biological role, involved in immune evasion, pathogenesis and viral replication. Once cleaved off the polyprotein, is targeted to three destinations: the viral replication cycle, the plasma membrane and the extracellular compartment. Essential for viral replication. Required for formation of the replication complex and recruitment of other non-structural proteins to the ER-derived membrane structures. Excreted as a hexameric lipoparticle that plays a role against host immune response. Antagonizing the complement function. Binds to the host macrophages and dendritic cells. Inhibits signal transduction originating from Toll-like receptor 3 (TLR3). Component of the viral RNA replication complex that functions in virion assembly and antagonizes the host alpha/beta interferon antiviral response. Functionally, required cofactor for the serine protease function of NS3. May have membrane-destabilizing activity and form viroporins. Its function is as follows. Displays three enzymatic activities: serine protease, NTPase and RNA helicase. NS3 serine protease, in association with NS2B, performs its autocleavage and cleaves the polyprotein at dibasic sites in the cytoplasm: C-prM, NS2A-NS2B, NS2B-NS3, NS3-NS4A, NS4A-2K and NS4B-NS5. NS3 RNA helicase binds RNA and unwinds dsRNA in the 3' to 5' direction. In terms of biological role, regulates the ATPase activity of the NS3 helicase activity. NS4A allows NS3 helicase to conserve energy during unwinding. Functions as a signal peptide for NS4B and is required for the interferon antagonism activity of the latter. Functionally, induces the formation of ER-derived membrane vesicles where the viral replication takes place. Inhibits interferon (IFN)-induced host STAT1 phosphorylation and nuclear translocation, thereby preventing the establishment of cellular antiviral state by blocking the IFN-alpha/beta pathway. Inhibits STAT2 translocation in the nucleus after IFN-alpha treatment. Its function is as follows. Replicates the viral (+) and (-) RNA genome, and performs the capping of genomes in the cytoplasm. NS5 methylates viral RNA cap at guanine N-7 and ribose 2'-O positions. Besides its role in RNA genome replication, also prevents the establishment of cellular antiviral state by blocking the interferon-alpha/beta (IFN-alpha/beta) signaling pathway. Inhibits host TYK2 and STAT2 phosphorylation, thereby preventing activation of JAK-STAT signaling pathway. This is Genome polyprotein from Agelaius tricolor (Tricolored blackbird).